Here is an 89-residue protein sequence, read N- to C-terminus: N.vectensis toxin 7 (89 aa).

A signal peptide spans 1–21; that stretch reads MASFFKIAVICLVMLVVCSNA. 3 disulfide bridges follow: C44/C77, C46/C69, and C62/C78.

In terms of tissue distribution, expressed in ectodermal gland cells.

In terms of biological role, probable toxin. This Nematostella vectensis (Starlet sea anemone) protein is N.vectensis toxin 7.